The primary structure comprises 414 residues: Na(+)-translocating NADH-quinone reductase subunit B (414 aa).

Helical transmembrane passes span 56 to 76 (IMIM…YNAG), 129 to 149 (FLPI…LFCM), and 164 to 184 (ILFA…LGIT). FMN phosphoryl threonine is present on threonine 236. 5 consecutive transmembrane segments (helical) span residues 268 to 288 (IPGS…AMIV), 297 to 317 (IIAG…VIGS), 325 to 345 (MPWH…FMAT), 358 to 378 (WWYG…NPAY), and 381 to 401 (GMML…HVVI).

Belongs to the NqrB/RnfD family. In terms of assembly, composed of six subunits; NqrA, NqrB, NqrC, NqrD, NqrE and NqrF. FMN serves as cofactor.

Its subcellular location is the cell inner membrane. It catalyses the reaction a ubiquinone + n Na(+)(in) + NADH + H(+) = a ubiquinol + n Na(+)(out) + NAD(+). Its activity is regulated as follows. This reaction is tightly coupled to the Na(+) pumping activity and specifically requires Na(+) for activity. Inhibited by korormicin and 2-N-heptyl-4-hydroxyquinoline N-oxide (HQNO). In terms of biological role, NQR complex catalyzes the reduction of ubiquinone-1 to ubiquinol by two successive reactions, coupled with the transport of Na(+) ions from the cytoplasm to the periplasm. NqrA to NqrE are probably involved in the second step, the conversion of ubisemiquinone to ubiquinol. In Vibrio alginolyticus, this protein is Na(+)-translocating NADH-quinone reductase subunit B.